The primary structure comprises 687 residues: uncharacterized protein (687 aa).

The segment covering 277–295 (SVCSSQSFSSGQSDISMSS) has biased composition (low complexity). Disordered regions lie at residues 277-337 (SVCS…QDCD), 342-361 (DTESVANEPEPYSSTMSEMP), and 531-564 (HVEQAGGDYSSSGQKDQKKKRGKRPVSNPPPSLI). The segment covering 300–313 (NGSSVGNGSLSPMT) has biased composition (polar residues).

This is an uncharacterized protein from Caenorhabditis elegans.